We begin with the raw amino-acid sequence, 251 residues long: Proteasome subunit alpha type-4-like (251 aa).

The protein belongs to the peptidase T1A family. As to quaternary structure, the 26S proteasome consists of a 20S proteasome core and two 19S regulatory subunits. The 20S proteasome core is composed of 28 subunits that are arranged in four stacked rings, resulting in a barrel-shaped structure. The two end rings are each formed by seven alpha subunits, and the two central rings are each formed by seven beta subunits. The catalytic chamber with the active sites is on the inside of the barrel. As to expression, testis, prominent after meiosis II. After meiosis, predominantly localized to the haploid spermatid nuclei of the 64-cell cysts, remaining during the elongation and condensation of the spermatid nuclei. In mature, motile sperm, expression is seen exclusively in the sperm head.

The protein localises to the nucleus. In terms of biological role, the proteasome is a multicatalytic proteinase complex which is characterized by its ability to cleave peptides with Arg, Phe, Tyr, Leu, and Glu adjacent to the leaving group at neutral or slightly basic pH. The proteasome has an ATP-dependent proteolytic activity. The chain is Proteasome subunit alpha type-4-like (Prosalpha3T) from Drosophila melanogaster (Fruit fly).